The following is a 423-amino-acid chain: MSYQRRHSRWYERVLFSPPSLFFLGAMLAVCLPALERWGWGFWEYFDAVRVNTLGGAFVAFLLTGIVLYRFLRYPGASPVAYMIPTVTTLYGSLVGALFFLRLPYSRQVLFESYVVALLCCWVVYFIGRRYRTPKYALLPFGDYQPLMHHTCVEWRLLDKPDLGAVRYDAVVADLRDDDLAGEWERFLARCALAHIPVYHIKQISETLTGRVKIDHLHENQLGSLLPSPIYAFIKRGMDILAAVIAIPLFSPLMLATAVLIKLESPGPVMFLQNRVGKGNRDFRIYKFRSMCQNSEQHGAQFAQDGDMRVTRVGKVIRKLRIDELPQFFNVLKGDMSLIGPRPEQRTFVDQFDREIPFYMYRHIVRPGISGWAQVVHGYAADADDTRIKIEHDFYYIKNFSLWLDVLIVFKTIRTILTGFGAR.

Over 1–13 (MSYQRRHSRWYER) the chain is Extracellular. A helical transmembrane segment spans residues 14–34 (VLFSPPSLFFLGAMLAVCLPA). Residues 35-47 (LERWGWGFWEYFD) lie on the Cytoplasmic side of the membrane. A helical transmembrane segment spans residues 48 to 68 (AVRVNTLGGAFVAFLLTGIVL). The Extracellular segment spans residues 69–79 (YRFLRYPGASP). A helical membrane pass occupies residues 80 to 100 (VAYMIPTVTTLYGSLVGALFF). Residues 101–107 (LRLPYSR) lie on the Cytoplasmic side of the membrane. Residues 108 to 128 (QVLFESYVVALLCCWVVYFIG) traverse the membrane as a helical segment. The Extracellular segment spans residues 129–239 (RRYRTPKYAL…IYAFIKRGMD (111 aa)). Residues 240–260 (ILAAVIAIPLFSPLMLATAVL) form a helical membrane-spanning segment. Topologically, residues 261–423 (IKLESPGPVM…RTILTGFGAR (163 aa)) are cytoplasmic.

The protein belongs to the bacterial sugar transferase family.

The protein localises to the membrane. The enzyme catalyses di-trans,octa-cis-undecaprenyl phosphate + UDP-N-acetyl-alpha-D-galactosamine = N-acetyl-alpha-D-galactosaminyl-di-trans,octa-cis-undecaprenyl diphosphate + UMP. Its pathway is bacterial outer membrane biogenesis; LPS O-antigen biosynthesis. Functionally, transfers N-acetyl-galactosamine (GalNAc) to undecaprenyl phosphate, a step in the assembly of the repeating-unit of the O-antigen. Shows no activity with UDP-N-acetyl-alpha-D-glucosamine. This is UDP-N-acetylgalactosamine-undecaprenyl-phosphate N-acetylgalactosaminephosphotransferase (wecA) from Aeromonas hydrophila.